A 209-amino-acid polypeptide reads, in one-letter code: Orotate phosphoribosyltransferase (209 aa).

Residues arginine 96, lysine 100, histidine 102, and 122–130 (EDLISTGGS) each bind 5-phospho-alpha-D-ribose 1-diphosphate. An orotate-binding site is contributed by serine 126.

Belongs to the purine/pyrimidine phosphoribosyltransferase family. PyrE subfamily. Homodimer. Requires Mg(2+) as cofactor.

It carries out the reaction orotidine 5'-phosphate + diphosphate = orotate + 5-phospho-alpha-D-ribose 1-diphosphate. It participates in pyrimidine metabolism; UMP biosynthesis via de novo pathway; UMP from orotate: step 1/2. Catalyzes the transfer of a ribosyl phosphate group from 5-phosphoribose 1-diphosphate to orotate, leading to the formation of orotidine monophosphate (OMP). The polypeptide is Orotate phosphoribosyltransferase (Streptococcus pyogenes serotype M5 (strain Manfredo)).